An 841-amino-acid chain; its full sequence is DNA mismatch repair protein MutS (841 aa).

An ATP-binding site is contributed by 600-607 (GPNMAGKS).

Belongs to the DNA mismatch repair MutS family.

This protein is involved in the repair of mismatches in DNA. It is possible that it carries out the mismatch recognition step. This protein has a weak ATPase activity. This is DNA mismatch repair protein MutS from Carboxydothermus hydrogenoformans (strain ATCC BAA-161 / DSM 6008 / Z-2901).